Reading from the N-terminus, the 539-residue chain is ATP synthase subunit beta (539 aa).

Positions 1–44 are disordered; it reads MAKTPAEKPATAAKKPAAPKAAAAPKAAAAKAPAAAKAPAAKKP. 212–219 serves as a coordination point for ATP; that stretch reads GGAGVGKT.

The protein belongs to the ATPase alpha/beta chains family. F-type ATPases have 2 components, CF(1) - the catalytic core - and CF(0) - the membrane proton channel. CF(1) has five subunits: alpha(3), beta(3), gamma(1), delta(1), epsilon(1). CF(0) has three main subunits: a(1), b(2) and c(9-12). The alpha and beta chains form an alternating ring which encloses part of the gamma chain. CF(1) is attached to CF(0) by a central stalk formed by the gamma and epsilon chains, while a peripheral stalk is formed by the delta and b chains.

The protein localises to the cell inner membrane. It catalyses the reaction ATP + H2O + 4 H(+)(in) = ADP + phosphate + 5 H(+)(out). Produces ATP from ADP in the presence of a proton gradient across the membrane. The catalytic sites are hosted primarily by the beta subunits. The protein is ATP synthase subunit beta of Caulobacter vibrioides (strain ATCC 19089 / CIP 103742 / CB 15) (Caulobacter crescentus).